The sequence spans 219 residues: Tegument protein UL14 (219 aa).

Residues 159–219 (VHTDAPSRPG…GFARDCPDGE (61 aa)) are disordered. Over residues 186–202 (APPPETAPSPEPAPGPA) the composition is skewed to pro residues.

It belongs to the alphaherpesvirinae HHV-1 UL14 protein family. In terms of processing, phosphorylated.

The protein localises to the virion tegument. It is found in the host cytoplasm. It localises to the host nucleus. In terms of biological role, contributes to the nuclear transport of the viral transcriptional activator VP16 during the early phase of infection. Therefore, participates indirectly in the regulation of the immediate-early gene expression. Additionally, seems to be important for efficient nuclear targeting of capsids. This is Tegument protein UL14 from Human herpesvirus 2 (strain HG52) (HHV-2).